The following is a 513-amino-acid chain: MQLNASEISSFIKDKIADYDNKVENKAEGTIVNVSDGIVQIQGLSQAMLGEMIELPNGNFALAMNLERDSVGAVVLGAYEHLREGDKVHCTGRILEVPVGRGLLGRVVDALGNPIDGKGKIDAEGSSPVEKIAPGVIERQSVDQPLQTGLKAIDSMVPLGRGQRELIIGDRQTGKTAIAIDAIINQKNTGVICIYVAIGQKASSIASVVRKLEEADALKHTIVVAASASTSAAMQYIAPYSGCAMGEFFRDRGEDALIIYDDLTKQAWAYRQVSLLLRRPPGREAYPGDVFYLHSRLLERAARINAKEVERLTAGKVKGKTGSLTALPIIETQAGDVSAFVPTNVISITDGQIFLETDLFNSGIRPAINAGLSVSRVGGAAQTQIIKKLGGGIRLALAQYRELAAFAQFASDLDEATRKQLEHGQRVTELMKQKQYAPLSVAEMAISLFAADKGYLDTVAVEDIMAYETALLSFMRENHADLMNTINTTGKYDEAVQTGLKEALDAFVEKRSL.

169–176 provides a ligand contact to ATP; the sequence is GDRQTGKT.

Belongs to the ATPase alpha/beta chains family. As to quaternary structure, F-type ATPases have 2 components, CF(1) - the catalytic core - and CF(0) - the membrane proton channel. CF(1) has five subunits: alpha(3), beta(3), gamma(1), delta(1), epsilon(1). CF(0) has three main subunits: a(1), b(2) and c(9-12). The alpha and beta chains form an alternating ring which encloses part of the gamma chain. CF(1) is attached to CF(0) by a central stalk formed by the gamma and epsilon chains, while a peripheral stalk is formed by the delta and b chains.

It localises to the cell inner membrane. The catalysed reaction is ATP + H2O + 4 H(+)(in) = ADP + phosphate + 5 H(+)(out). Its function is as follows. Produces ATP from ADP in the presence of a proton gradient across the membrane. The alpha chain is a regulatory subunit. The polypeptide is ATP synthase subunit alpha (Dichelobacter nodosus (strain VCS1703A)).